The following is a 517-amino-acid chain: Crotonobetaine/carnitine--CoA ligase (517 aa).

This sequence belongs to the ATP-dependent AMP-binding enzyme family.

It catalyses the reaction 4-(trimethylamino)butanoate + ATP + CoA = 4-(trimethylamino)butanoyl-CoA + AMP + diphosphate. It carries out the reaction crotonobetaine + ATP + CoA = crotonobetainyl-CoA + AMP + diphosphate. The catalysed reaction is (R)-carnitine + ATP + CoA = (R)-carnitinyl-CoA + AMP + diphosphate. It participates in amine and polyamine metabolism; carnitine metabolism. Catalyzes the transfer of CoA to carnitine, generating the initial carnitinyl-CoA needed for the CaiB reaction cycle. Also has activity toward crotonobetaine and gamma-butyrobetaine. This chain is Crotonobetaine/carnitine--CoA ligase, found in Escherichia fergusonii (strain ATCC 35469 / DSM 13698 / CCUG 18766 / IAM 14443 / JCM 21226 / LMG 7866 / NBRC 102419 / NCTC 12128 / CDC 0568-73).